The sequence spans 418 residues: Fumarylacetoacetase (418 aa).

Asp-127 provides a ligand contact to Ca(2+). The Proton acceptor role is filled by His-134. Ca(2+)-binding residues include Glu-200, Glu-202, and Asp-235. Mg(2+) is bound by residues Asp-235, Lys-255, and Thr-259.

Belongs to the FAH family. The cofactor is Ca(2+). It depends on Mg(2+) as a cofactor. Highly expressed in the intestine and the hypodermis.

It catalyses the reaction 4-fumarylacetoacetate + H2O = acetoacetate + fumarate + H(+). It functions in the pathway amino-acid degradation; L-phenylalanine degradation; acetoacetate and fumarate from L-phenylalanine: step 6/6. Functionally, fumarylacetoacetase involved in the tyrosine degradation pathway. In Caenorhabditis elegans, this protein is Fumarylacetoacetase.